The following is a 1240-amino-acid chain: DNA-directed RNA polymerase subunit beta (1240 aa).

The protein belongs to the RNA polymerase beta chain family. The RNAP catalytic core consists of 2 alpha, 1 beta, 1 beta' and 1 omega subunit. When a sigma factor is associated with the core the holoenzyme is formed, which can initiate transcription.

The catalysed reaction is RNA(n) + a ribonucleoside 5'-triphosphate = RNA(n+1) + diphosphate. Its function is as follows. DNA-dependent RNA polymerase catalyzes the transcription of DNA into RNA using the four ribonucleoside triphosphates as substrates. The polypeptide is DNA-directed RNA polymerase subunit beta (Rhodopirellula baltica (strain DSM 10527 / NCIMB 13988 / SH1)).